The chain runs to 94 residues: Protein translocase subunit SecE (94 aa).

The segment at 1-32 (MTDAVGSIDTPDAQDEVPESKKTRKGGKRAKK) is disordered. Residues 22-32 (KTRKGGKRAKK) are compositionally biased toward basic residues. Residues 59-81 (QLTSYTTVVIFFVAIMIRLVTVI) traverse the membrane as a helical segment.

This sequence belongs to the SecE/SEC61-gamma family. As to quaternary structure, component of the Sec protein translocase complex. Heterotrimer consisting of SecY, SecE and SecG subunits. The heterotrimers can form oligomers, although 1 heterotrimer is thought to be able to translocate proteins. Interacts with the ribosome. Interacts with SecDF, and other proteins may be involved. Interacts with SecA.

It localises to the cell membrane. Essential subunit of the Sec protein translocation channel SecYEG. Clamps together the 2 halves of SecY. May contact the channel plug during translocation. This Streptomyces galbus protein is Protein translocase subunit SecE.